A 122-amino-acid polypeptide reads, in one-letter code: Large ribosomal subunit protein uL14c (122 aa).

The protein belongs to the universal ribosomal protein uL14 family. As to quaternary structure, part of the 50S ribosomal subunit.

The protein localises to the plastid. Its subcellular location is the chloroplast. Binds to 23S rRNA. In Oenothera biennis (German evening primrose), this protein is Large ribosomal subunit protein uL14c.